Consider the following 310-residue polypeptide: Protein DOS2 (310 aa).

Basic and acidic residues-rich tracts occupy residues 15–26 and 135–146; these read DKISNSHTKETG and SNDKDENSKENE. Disordered stretches follow at residues 15–45 and 131–151; these read DKISNSHTKETGSTENTENNELQSRDDKTNE and AENDSNDKDENSKENEIAVGG. The region spanning 176–228 is the BSD domain; sequence QLDPFDVDEKTEEICSILQGDKDISKLMNDIVPHKISYKDFWHIYFLQRNKIL. The tract at residues 240 to 310 is disordered; sequence KKEKETEEKE…KDDDDDDDWE (71 aa). Residues 247–263 show a composition bias toward acidic residues; sequence EKEVEWDDEEEEEDDDK. Composition is skewed to basic and acidic residues over residues 264 to 276 and 284 to 300; these read VEAVADNKSKGET and GLKDVSDHVGLANKDES. The segment covering 301–310 has biased composition (acidic residues); that stretch reads KDDDDDDDWE.

Acts in ubiquitin metabolism and is necessary for the control of single-copy DNA replication. The protein is Protein DOS2 (DOS2) of Saccharomyces cerevisiae (strain ATCC 204508 / S288c) (Baker's yeast).